Here is a 439-residue protein sequence, read N- to C-terminus: ATP-dependent protease ATPase subunit HslU (439 aa).

ATP contacts are provided by residues Ile-17, 59-64 (GVGKTE), Asp-251, Glu-317, and Arg-389.

Belongs to the ClpX chaperone family. HslU subfamily. As to quaternary structure, a double ring-shaped homohexamer of HslV is capped on each side by a ring-shaped HslU homohexamer. The assembly of the HslU/HslV complex is dependent on binding of ATP.

The protein resides in the cytoplasm. Functionally, ATPase subunit of a proteasome-like degradation complex; this subunit has chaperone activity. The binding of ATP and its subsequent hydrolysis by HslU are essential for unfolding of protein substrates subsequently hydrolyzed by HslV. HslU recognizes the N-terminal part of its protein substrates and unfolds these before they are guided to HslV for hydrolysis. This is ATP-dependent protease ATPase subunit HslU from Campylobacter jejuni (strain RM1221).